We begin with the raw amino-acid sequence, 289 residues long: BTB/POZ domain-containing protein KCTD7 (289 aa).

Residues 1–42 are disordered; that stretch reads MVVVTGREPDSRHSDGAMSSSEAEDDFLEPATPTATQAGHGL. The BTB domain maps to 53–141; that stretch reads VPLNIGGAHF…YAIGPLLEQL (89 aa).

Interacts with CUL3. High expression in brain, particularly in post-mitotic neurons. Expressed in the mitral cells of the olfactory bulbs, the hippocampus, the deep layers of the cerebral cortex and Purkinje cells of the cerebellum. Not detected in astrocytes or microglial cells. Also expressed in heart, liver, spleen and kidney.

It is found in the cell membrane. The protein localises to the cytoplasm. The protein resides in the cytosol. May be involved in the control of excitability of cortical neurons. This Mus musculus (Mouse) protein is BTB/POZ domain-containing protein KCTD7 (Kctd7).